We begin with the raw amino-acid sequence, 142 residues long: Large ribosomal subunit protein uL13 (142 aa).

Belongs to the universal ribosomal protein uL13 family. As to quaternary structure, part of the 50S ribosomal subunit.

Its function is as follows. This protein is one of the early assembly proteins of the 50S ribosomal subunit, although it is not seen to bind rRNA by itself. It is important during the early stages of 50S assembly. The sequence is that of Large ribosomal subunit protein uL13 from Saccharophagus degradans (strain 2-40 / ATCC 43961 / DSM 17024).